A 213-amino-acid polypeptide reads, in one-letter code: Probable transaldolase (213 aa).

Residue Lys83 is the Schiff-base intermediate with substrate of the active site.

The protein belongs to the transaldolase family. Type 3B subfamily.

The protein localises to the cytoplasm. It carries out the reaction D-sedoheptulose 7-phosphate + D-glyceraldehyde 3-phosphate = D-erythrose 4-phosphate + beta-D-fructose 6-phosphate. It functions in the pathway carbohydrate degradation; pentose phosphate pathway; D-glyceraldehyde 3-phosphate and beta-D-fructose 6-phosphate from D-ribose 5-phosphate and D-xylulose 5-phosphate (non-oxidative stage): step 2/3. Its function is as follows. Transaldolase is important for the balance of metabolites in the pentose-phosphate pathway. The sequence is that of Probable transaldolase from Syntrophomonas wolfei subsp. wolfei (strain DSM 2245B / Goettingen).